The chain runs to 230 residues: Transmembrane ascorbate ferrireductase 2 (230 aa).

2 helical membrane-spanning segments follow: residues 5–25 (VLGG…IAAL) and 50–70 (VHPV…MLAY). Residues 14–218 (VVRVLGFIIA…LGGFVILGVV (205 aa)) form the Cytochrome b561 domain. Residue histidine 51 participates in heme b binding. Residues lysine 77 and lysine 81 each contribute to the L-ascorbate site. The helical transmembrane segment at 82-102 (LVHLTLQLTAFILSLIGVWAA) threads the bilayer. Histidine 84 is a heme b binding site. Monodehydro-L-ascorbate radical-binding residues include phenylalanine 105, histidine 106, and tyrosine 115. Histidine 118 contacts heme b. Residues 120 to 140 (WLGLACLFLFAFQWAAGFVTY) traverse the membrane as a helical segment. L-ascorbate is bound by residues tyrosine 140, arginine 150, and alanine 151. Histidine 157 provides a ligand contact to heme b. The helical transmembrane segment at 157–177 (HVFLGISIYALALVTATTGIL) threads the bilayer. Residues phenylalanine 182 and asparagine 186 each coordinate monodehydro-L-ascorbate radical. A helical transmembrane segment spans residues 198–218 (LVNTMGVLILILGGFVILGVV).

As to quaternary structure, homodimer. Heme b serves as cofactor. As to expression, expressed in roots, seedlings, leaves and flowers. Expressed in the L1 layer of the shoot apex, in the epidermis of leaf primordia and young leaves and in vascular bundles. In the differentiation zone of the root, detected in the pericycle and in the epidermis, but not in the cortex. Strongly expressed in the cortical region of the root tip, in the meristematic tissue and in the epidermal cell layer of lateral roots, but not in the root caps. Highly expressed in unfertilized ovules. In mature embryos, expressed in the epidermis, cotyledon tips and root tips.

Its subcellular location is the membrane. The catalysed reaction is Fe(3+)(out) + L-ascorbate(in) = monodehydro-L-ascorbate radical(in) + Fe(2+)(out) + H(+). Two-heme-containing cytochrome. Catalyzes ascorbate-dependent transmembrane ferric-chelate reduction. In Arabidopsis thaliana (Mouse-ear cress), this protein is Transmembrane ascorbate ferrireductase 2 (CYB561B).